The sequence spans 276 residues: Glutamate 5-kinase (276 aa).

Lys-14 provides a ligand contact to ATP. 3 residues coordinate substrate: Ser-54, Asp-141, and Asn-157. Residues 177 to 178 (SD) and 219 to 225 (TGGMLTK) contribute to the ATP site.

This sequence belongs to the glutamate 5-kinase family.

Its subcellular location is the cytoplasm. The enzyme catalyses L-glutamate + ATP = L-glutamyl 5-phosphate + ADP. Its pathway is amino-acid biosynthesis; L-proline biosynthesis; L-glutamate 5-semialdehyde from L-glutamate: step 1/2. Its function is as follows. Catalyzes the transfer of a phosphate group to glutamate to form L-glutamate 5-phosphate. The chain is Glutamate 5-kinase from Listeria monocytogenes serovar 1/2a (strain ATCC BAA-679 / EGD-e).